Reading from the N-terminus, the 30-residue chain is Cliotide T6 (30 aa).

Positions 1-30 (SIPCGESCVYIPCITTIVGCSCKDKVCYKN) form a cross-link, cyclopeptide (Ser-Asn). 3 disulfide bridges follow: C4/C20, C8/C22, and C13/C27.

Contains 3 disulfide bonds. In terms of processing, this is a cyclic peptide. Expressed in pod but not in flower, stem, shoot, leaf, seed, root and nodule (at protein level).

Functionally, probably participates in a plant defense mechanism. In Clitoria ternatea (Butterfly pea), this protein is Cliotide T6.